The sequence spans 527 residues: Probable protein kinase UbiB (527 aa).

The region spanning 123-527 is the Protein kinase domain; sequence EFNETALASA…AIWLLIYLLS (405 aa). ATP-binding positions include 129–137 and Lys161; that span reads LASASIAQV. Asp296 acts as the Proton acceptor in catalysis. A helical transmembrane segment spans residues 506–526; that stretch reads FTSFILGLCTGLAIWLLIYLL.

Belongs to the ABC1 family. UbiB subfamily.

The protein resides in the cell inner membrane. Its pathway is cofactor biosynthesis; ubiquinone biosynthesis [regulation]. Its function is as follows. Is probably a protein kinase regulator of UbiI activity which is involved in aerobic coenzyme Q (ubiquinone) biosynthesis. In Pasteurella multocida (strain Pm70), this protein is Probable protein kinase UbiB.